A 155-amino-acid polypeptide reads, in one-letter code: uncharacterized protein (155 aa).

The signal sequence occupies residues 1-30 (MTYNTNTSLSSYAGLSAFALSVFCILWGTA).

This is an uncharacterized protein from Treponema pallidum (strain Nichols).